An 85-amino-acid chain; its full sequence is Beta-toxin Ct6 (85 aa).

An N-terminal signal peptide occupies residues 1-18; that stretch reads MKTFVLALCLVLIGMVYA. The region spanning 19 to 84 is the LCN-type CS-alpha/beta domain; the sequence is KDGYLVSKHT…VYPLPNKSCG (66 aa). 4 disulfide bridges follow: C30/C83, C34/C59, C43/C64, and C47/C66. Residue C83 is modified to Cysteine amide.

Belongs to the long (4 C-C) scorpion toxin superfamily. Sodium channel inhibitor family. Beta subfamily. As to expression, expressed by the venom gland.

It is found in the secreted. Beta toxins bind voltage-independently at site-4 of sodium channels (Nav) and shift the voltage of activation toward more negative potentials thereby affecting sodium channel activation and promoting spontaneous and repetitive firing. The chain is Beta-toxin Ct6 from Centruroides tecomanus (Scorpion).